We begin with the raw amino-acid sequence, 35 residues long: Photosystem II reaction center protein Psb30 (35 aa).

Residues 7–27 (LIANFAALALITLAGPAVIFI) form a helical membrane-spanning segment.

It belongs to the Psb30/Ycf12 family. As to quaternary structure, PSII is composed of 1 copy each of membrane proteins PsbA, PsbB, PsbC, PsbD, PsbE, PsbF, PsbH, PsbI, PsbJ, PsbK, PsbL, PsbM, PsbT, PsbX, PsbY, PsbZ, Psb30/Ycf12, peripheral proteins of the oxygen-evolving complex and a large number of cofactors. It forms dimeric complexes.

The protein resides in the plastid. It localises to the organellar chromatophore thylakoid membrane. Its function is as follows. A core subunit of photosystem II (PSII), probably helps stabilize the reaction center. This Paulinella chromatophora protein is Photosystem II reaction center protein Psb30.